The sequence spans 391 residues: MSLNPRDVVIVDFGRTPMGRSKGGMHRNTRAEDMSAHLISKLLERNTKVDPAEVEDVIWGCVNQTLEQGWNIARMASLMTQIPHTSAGQTVSRLCGSSMSALHTAAQAIMTGNGDVFVVGGVEHMGHVSMMHGVDPNPHMSLYAAKASGMMGLTAEMLGKMHGITREQQDAFGVRSHQLAHKATVEGKFKDEIIPMQGYDENGFLKTFDYDETIRPETTLESLAALKPAFNPKGGTVTAGTSSQITDGASCMIVMSAQRAQDLGIQPLAVIRSMAVAGVDPAIMGYGPVPATQKALKRAGLGINDIDFFELNEAFAAQALPVLKDLKVLDKMNEKVNLHGGAIALGHPFGCSGARISGTLLNVMKQNGGTFGVATMCIGLGQGISTVFERV.

The Acyl-thioester intermediate role is filled by Cys95. Residues His347 and Cys377 each act as proton acceptor in the active site.

This sequence belongs to the thiolase-like superfamily. Thiolase family. As to quaternary structure, heterotetramer of two alpha chains (FadB) and two beta chains (FadA).

It is found in the cytoplasm. The enzyme catalyses an acyl-CoA + acetyl-CoA = a 3-oxoacyl-CoA + CoA. It functions in the pathway lipid metabolism; fatty acid beta-oxidation. Functionally, catalyzes the final step of fatty acid oxidation in which acetyl-CoA is released and the CoA ester of a fatty acid two carbons shorter is formed. In Pseudomonas fluorescens (strain Pf0-1), this protein is 3-ketoacyl-CoA thiolase.